A 60-amino-acid polypeptide reads, in one-letter code: Large ribosomal subunit protein bL33 (60 aa).

It belongs to the bacterial ribosomal protein bL33 family.

In Chlorobium phaeovibrioides (strain DSM 265 / 1930) (Prosthecochloris vibrioformis (strain DSM 265)), this protein is Large ribosomal subunit protein bL33.